The sequence spans 593 residues: Tyrosine-protein phosphatase non-receptor type 11 (593 aa).

2 consecutive SH2 domains span residues 6 to 102 and 112 to 216; these read WFHP…KYPL and WFHG…KQPL. The 275-residue stretch at 247 to 521 folds into the Tyrosine-protein phosphatase domain; it reads FWEEFETLQQ…RFIYMAVQHY (275 aa). Substrate-binding positions include Asp425, 459-465, and Gln506; that span reads CSAGIGR. Cys459 acts as the Phosphocysteine intermediate in catalysis. A compositionally biased stretch (polar residues) spans 548–557; it reads SLSDQTSGDQ. The disordered stretch occupies residues 548-575; the sequence is SLSDQTSGDQSPLPPCTPTPTCPEMRED. Residues 559-568 are compositionally biased toward pro residues; the sequence is PLPPCTPTPT.

The protein belongs to the protein-tyrosine phosphatase family. Non-receptor class 2 subfamily. Post-translationally, phosphorylated by tyrosine-protein kinases. As to expression, expressed in embryonic fibroblast, hematopoietic, erythroid, myeloid and lymphoid cells.

It localises to the cytoplasm. It catalyses the reaction O-phospho-L-tyrosyl-[protein] + H2O = L-tyrosyl-[protein] + phosphate. In terms of biological role, this PTPase activity may directly link growth factor receptors and other signaling proteins through protein-tyrosine phosphorylation. The SH2 regions may interact with other cellular components to modulate its own phosphatase activity against interacting substrates. May play a positive role during the stages of erythroid cell proliferation. The sequence is that of Tyrosine-protein phosphatase non-receptor type 11 (PTPN11) from Gallus gallus (Chicken).